The primary structure comprises 285 residues: Energy-coupling factor transporter ATP-binding protein EcfA2 (285 aa).

One can recognise an ABC transporter domain in the interval 6–242; it reads LKVEELNYNY…KEVIRKVNLR (237 aa). 39-46 provides a ligand contact to ATP; the sequence is GGNGVGKS.

It belongs to the ABC transporter superfamily. Energy-coupling factor EcfA family. Forms a stable energy-coupling factor (ECF) transporter complex composed of 2 membrane-embedded substrate-binding proteins (S component), 2 ATP-binding proteins (A component) and 2 transmembrane proteins (T component).

The protein resides in the cell membrane. In terms of biological role, ATP-binding (A) component of a common energy-coupling factor (ECF) ABC-transporter complex. Unlike classic ABC transporters this ECF transporter provides the energy necessary to transport a number of different substrates. The chain is Energy-coupling factor transporter ATP-binding protein EcfA2 from Clostridium perfringens (strain SM101 / Type A).